The chain runs to 378 residues: Alanine racemase (378 aa).

The active-site Proton acceptor; specific for D-alanine is Lys40. Position 40 is an N6-(pyridoxal phosphate)lysine (Lys40). A substrate-binding site is contributed by Arg140. Tyr270 acts as the Proton acceptor; specific for L-alanine in catalysis. Met317 is a substrate binding site.

It belongs to the alanine racemase family. Pyridoxal 5'-phosphate is required as a cofactor.

The catalysed reaction is L-alanine = D-alanine. Its pathway is amino-acid biosynthesis; D-alanine biosynthesis; D-alanine from L-alanine: step 1/1. In terms of biological role, catalyzes the interconversion of L-alanine and D-alanine. May also act on other amino acids. This Lacticaseibacillus casei (strain BL23) (Lactobacillus casei) protein is Alanine racemase (alr).